The following is a 493-amino-acid chain: Glycosyltransferase alg8 (493 aa).

4 helical membrane-spanning segments follow: residues 13–32 (GWLFYLSLLMGLAAALPTSI), 47–69 (VGIWRYSMGITHFVRGMIFLYIV), 380–402 (LTVAIIASFKYGGAFLLMYLLWI), and 422–444 (PAYPMILYYNQIVGALMKIYVFF).

This sequence belongs to the glycosyltransferase 2 family.

It is found in the cell membrane. Its pathway is glycan biosynthesis; alginate biosynthesis. In terms of biological role, possibly a processive enzyme that polymerizes GDP-mannuronic acid. This is Glycosyltransferase alg8 (alg8) from Pseudomonas syringae pv. tomato (strain ATCC BAA-871 / DC3000).